The chain runs to 258 residues: Acyl-[acyl-carrier-protein]--UDP-N-acetylglucosamine O-acyltransferase (258 aa).

Belongs to the transferase hexapeptide repeat family. LpxA subfamily. Homotrimer.

The protein resides in the cytoplasm. The enzyme catalyses a (3R)-hydroxyacyl-[ACP] + UDP-N-acetyl-alpha-D-glucosamine = a UDP-3-O-[(3R)-3-hydroxyacyl]-N-acetyl-alpha-D-glucosamine + holo-[ACP]. The protein operates within glycolipid biosynthesis; lipid IV(A) biosynthesis; lipid IV(A) from (3R)-3-hydroxytetradecanoyl-[acyl-carrier-protein] and UDP-N-acetyl-alpha-D-glucosamine: step 1/6. In terms of biological role, involved in the biosynthesis of lipid A, a phosphorylated glycolipid that anchors the lipopolysaccharide to the outer membrane of the cell. In Halorhodospira halophila (strain DSM 244 / SL1) (Ectothiorhodospira halophila (strain DSM 244 / SL1)), this protein is Acyl-[acyl-carrier-protein]--UDP-N-acetylglucosamine O-acyltransferase.